The chain runs to 617 residues: Dihydroxy-acid dehydratase (617 aa).

Aspartate 81 is a binding site for Mg(2+). Cysteine 122 is a [2Fe-2S] cluster binding site. Mg(2+) contacts are provided by aspartate 123 and lysine 124. Lysine 124 bears the N6-carboxylysine mark. Cysteine 197 contacts [2Fe-2S] cluster. Glutamate 494 is a binding site for Mg(2+). Serine 520 acts as the Proton acceptor in catalysis.

Belongs to the IlvD/Edd family. As to quaternary structure, homodimer. [2Fe-2S] cluster serves as cofactor. Mg(2+) is required as a cofactor.

It catalyses the reaction (2R)-2,3-dihydroxy-3-methylbutanoate = 3-methyl-2-oxobutanoate + H2O. It carries out the reaction (2R,3R)-2,3-dihydroxy-3-methylpentanoate = (S)-3-methyl-2-oxopentanoate + H2O. It functions in the pathway amino-acid biosynthesis; L-isoleucine biosynthesis; L-isoleucine from 2-oxobutanoate: step 3/4. The protein operates within amino-acid biosynthesis; L-valine biosynthesis; L-valine from pyruvate: step 3/4. Its function is as follows. Functions in the biosynthesis of branched-chain amino acids. Catalyzes the dehydration of (2R,3R)-2,3-dihydroxy-3-methylpentanoate (2,3-dihydroxy-3-methylvalerate) into 2-oxo-3-methylpentanoate (2-oxo-3-methylvalerate) and of (2R)-2,3-dihydroxy-3-methylbutanoate (2,3-dihydroxyisovalerate) into 2-oxo-3-methylbutanoate (2-oxoisovalerate), the penultimate precursor to L-isoleucine and L-valine, respectively. This Parafrankia sp. (strain EAN1pec) protein is Dihydroxy-acid dehydratase.